The sequence spans 149 residues: Immunoglobulin kappa chain variable 6-17 (149 aa).

The signal sequence occupies residues 1–29; it reads MHHTSMGIKMESQIQVFVFVFLWLSGVDG. 2 consecutive repeats follow at residues 26–35 and 38–47; these read GVDGDIVMTQ. Positions 42–64 are framework-1; that stretch reads DIVMTQSHKFMSTSVGDRVSITC. Positions 65–75 are complementarity-determining-1; that stretch reads KASQDVSTTVA. Positions 76–90 are framework-2; the sequence is WYQQKPGQSPKLLIY. Positions 91–97 are complementarity-determining-2; the sequence is SASYRYT. The interval 98–129 is framework-3; sequence GVPDRFTGSGSGTDFTFTISSVQAEDLAVYYC. The segment at 130-138 is complementarity-determining-3; it reads QQHYSTPPT. The segment at 139-148 is framework-4; sequence FGGGTKLEIK.

This Mus musculus (Mouse) protein is Immunoglobulin kappa chain variable 6-17.